The primary structure comprises 976 residues: Ephrin type-B receptor 4b (976 aa).

The signal sequence occupies residues 1-23 (MDRVCWIMALSWFWMVSTGLVSA). The Extracellular segment spans residues 24 to 541 (EEEVLMNTKL…ESPSRLMLTG (518 aa)). Residues 25 to 204 (EEVLMNTKLE…FFKKCPAVSR (180 aa)) form the Eph LBD domain. Disulfide bonds link Cys-69–Cys-186 and Cys-103–Cys-113. Fibronectin type-III domains follow at residues 326-434 (PPSA…TSRD) and 438-529 (PVSG…TLPD). Residues 542-562 (VLVAIGLLILIAVVIVAVFCF) form a helical membrane-spanning segment. The Cytoplasmic segment spans residues 563-976 (RRSTRRRDPD…LRIHGGSLRY (414 aa)). The Protein kinase domain occupies 613-897 (VKIEEVIGAG…IPDGPSHPLL (285 aa)). Residues 619–627 (IGAGEFGEV) and Lys-645 each bind ATP. Catalysis depends on Asp-738, which acts as the Proton acceptor. The region spanning 906-970 (SHCSSVADWL…LSSVQTLRIH (65 aa)) is the SAM domain.

Belongs to the protein kinase superfamily. Tyr protein kinase family. Ephrin receptor subfamily.

It localises to the cell membrane. The enzyme catalyses L-tyrosyl-[protein] + ATP = O-phospho-L-tyrosyl-[protein] + ADP + H(+). Functionally, receptor tyrosine kinase which binds promiscuously transmembrane ephrin-B family ligands residing on adjacent cells, leading to contact-dependent bidirectional signaling into neighboring cells. The signaling pathway downstream of the receptor is referred to as forward signaling while the signaling pathway downstream of the ephrin ligand is referred to as reverse signaling. Together with its cognate ligand/functional ligand EFNB2 is involved in the regulation of cell adhesion and cell migration, and plays a central role in heart morphogenesis, angiogenesis and blood vessel remodeling and permeability. EPHB4-mediated forward signaling controls cellular repulsion and segregation from EFNB2-expressing cells. Involved in somitogenesis. The protein is Ephrin type-B receptor 4b of Danio rerio (Zebrafish).